The following is a 121-amino-acid chain: uncharacterized protein (121 aa).

A run of 3 helical transmembrane segments spans residues 2–22 (VFVT…IYTI), 42–62 (FICI…YILF), and 89–109 (IFFA…LSIF).

It is found in the membrane. This is an uncharacterized protein from Saccharomyces cerevisiae (strain ATCC 204508 / S288c) (Baker's yeast).